The chain runs to 79 residues: Large ribosomal subunit protein uL29 (79 aa).

This sequence belongs to the universal ribosomal protein uL29 family.

In Tropheryma whipplei (strain TW08/27) (Whipple's bacillus), this protein is Large ribosomal subunit protein uL29.